A 229-amino-acid polypeptide reads, in one-letter code: Large ribosomal subunit protein uL1 (229 aa).

The protein belongs to the universal ribosomal protein uL1 family. In terms of assembly, part of the 50S ribosomal subunit.

Its function is as follows. Binds directly to 23S rRNA. The L1 stalk is quite mobile in the ribosome, and is involved in E site tRNA release. In terms of biological role, protein L1 is also a translational repressor protein, it controls the translation of the L11 operon by binding to its mRNA. This is Large ribosomal subunit protein uL1 from Haemophilus influenzae (strain 86-028NP).